We begin with the raw amino-acid sequence, 81 residues long: ATP synthase subunit c, chloroplastic (81 aa).

The next 2 helical transmembrane spans lie at 3-23 (PLIS…ASIG) and 57-77 (LAFM…LLFA).

It belongs to the ATPase C chain family. F-type ATPases have 2 components, F(1) - the catalytic core - and F(0) - the membrane proton channel. F(1) has five subunits: alpha(3), beta(3), gamma(1), delta(1), epsilon(1). F(0) has four main subunits: a(1), b(1), b'(1) and c(10-14). The alpha and beta chains form an alternating ring which encloses part of the gamma chain. F(1) is attached to F(0) by a central stalk formed by the gamma and epsilon chains, while a peripheral stalk is formed by the delta, b and b' chains.

It is found in the plastid. The protein resides in the chloroplast thylakoid membrane. F(1)F(0) ATP synthase produces ATP from ADP in the presence of a proton or sodium gradient. F-type ATPases consist of two structural domains, F(1) containing the extramembraneous catalytic core and F(0) containing the membrane proton channel, linked together by a central stalk and a peripheral stalk. During catalysis, ATP synthesis in the catalytic domain of F(1) is coupled via a rotary mechanism of the central stalk subunits to proton translocation. Functionally, key component of the F(0) channel; it plays a direct role in translocation across the membrane. A homomeric c-ring of between 10-14 subunits forms the central stalk rotor element with the F(1) delta and epsilon subunits. This Ceratophyllum demersum (Rigid hornwort) protein is ATP synthase subunit c, chloroplastic.